Reading from the N-terminus, the 369-residue chain is Forkhead box protein I2-A (369 aa).

Positions 124 to 218 form a DNA-binding region, fork-head; that stretch reads RPPYSYSSLI…DNGNFRRKRK (95 aa). A disordered region spans residues 215–252; it reads RKRKRKSESVGAGFDEDSNEDKKPLALKSLGSDSPQGA.

Localized to the animal hemisphere of early cleavage stage embryos. Zygotic expression is restricted to the dorsal part of the epibranchial placodes of the head within a region located near the tip of the first, second and third visceral pouch.

The protein localises to the nucleus. Possible transcriptional activator. This is Forkhead box protein I2-A (foxi2-a) from Xenopus laevis (African clawed frog).